The chain runs to 244 residues: MPESPSISAVRDLREATCGPIGTPEVTNELSENIILTSLDDLHNWARLSSLWPLLYGTACCFIEFAALLGSRFDFDRFGLVPRSSPRQADLLIVAGTVTMKMAPALVRLYEQMPEPKYVIAMGACTITGGMFSADSTTAVRGVDKLIPVDLYLPGCPPRPEAIFDAVIKLRKKVGDESLAERSKHQQTHRYFTMTHQMKAVEPQVTGAYLRAESQQAALAAAPAGQTLATDAAVLNPAPEMVQP.

Positions 60, 61, 125, and 156 each coordinate [4Fe-4S] cluster.

The protein belongs to the complex I 20 kDa subunit family. NDH-1 can be composed of about 15 different subunits; different subcomplexes with different compositions have been identified which probably have different functions. It depends on [4Fe-4S] cluster as a cofactor.

It is found in the cellular thylakoid membrane. It catalyses the reaction a plastoquinone + NADH + (n+1) H(+)(in) = a plastoquinol + NAD(+) + n H(+)(out). It carries out the reaction a plastoquinone + NADPH + (n+1) H(+)(in) = a plastoquinol + NADP(+) + n H(+)(out). In terms of biological role, NDH-1 shuttles electrons from an unknown electron donor, via FMN and iron-sulfur (Fe-S) centers, to quinones in the respiratory and/or the photosynthetic chain. The immediate electron acceptor for the enzyme in this species is believed to be plastoquinone. Couples the redox reaction to proton translocation, and thus conserves the redox energy in a proton gradient. Cyanobacterial NDH-1 also plays a role in inorganic carbon-concentration. This chain is NAD(P)H-quinone oxidoreductase subunit K, found in Synechococcus sp. (strain CC9902).